The sequence spans 474 residues: Phenylalanine--tRNA ligase alpha subunit (474 aa).

Residues threonine 317, 356–358, and tyrosine 396 contribute to the L-phenylalanine site; that span reads QLE. Glutamate 398 provides a ligand contact to Mg(2+). Residue phenylalanine 421 participates in L-phenylalanine binding.

Belongs to the class-II aminoacyl-tRNA synthetase family. Phe-tRNA synthetase alpha subunit type 2 subfamily. In terms of assembly, tetramer of two alpha and two beta subunits. Requires Mg(2+) as cofactor.

Its subcellular location is the cytoplasm. It carries out the reaction tRNA(Phe) + L-phenylalanine + ATP = L-phenylalanyl-tRNA(Phe) + AMP + diphosphate + H(+). In Archaeoglobus fulgidus (strain ATCC 49558 / DSM 4304 / JCM 9628 / NBRC 100126 / VC-16), this protein is Phenylalanine--tRNA ligase alpha subunit.